Reading from the N-terminus, the 320-residue chain is Short-chain dehydrogenase TIC 32 B, chloroplastic (320 aa).

NADP(+) is bound by residues Gly40–Gly46, Asp92–Leu93, Asn119, and Thr140. Substrate is bound at residue Ser174. The active-site Proton acceptor is Tyr196. Residues Asp301 to Asp317 are interaction with calmodulin.

This sequence belongs to the short-chain dehydrogenases/reductases (SDR) family. In terms of assembly, part of the Tic complex.

The protein localises to the plastid. The protein resides in the chloroplast inner membrane. In terms of biological role, involved in protein precursor import into chloroplasts. The sequence is that of Short-chain dehydrogenase TIC 32 B, chloroplastic from Brassica napus (Rape).